A 418-amino-acid chain; its full sequence is Trans-acting enoyl reductase (418 aa).

The protein belongs to the saccharopine dehydrogenase family. Enoyl reductase subfamily.

Involved in the reduction of the double bond between C-4 and C-5 during phthiocerol dimycocerosates (DIM A) and glycosylated phenolphthiocerol dimycocerosates (PGL) biosynthesis. This Mycobacterium tuberculosis (strain ATCC 25177 / H37Ra) protein is Trans-acting enoyl reductase.